A 286-amino-acid polypeptide reads, in one-letter code: Acetyl-coenzyme A carboxylase carboxyl transferase subunit beta (286 aa).

One can recognise a CoA carboxyltransferase N-terminal domain in the interval 27–286 (LMTKCPKCKL…HSEETNHATI (260 aa)). Positions 31, 34, 50, and 52 each coordinate Zn(2+). Residues 31 to 52 (CPKCKLIQYTKQLEANLKVCVC) form a C4-type zinc finger.

It belongs to the AccD/PCCB family. In terms of assembly, acetyl-CoA carboxylase is a heterohexamer composed of biotin carboxyl carrier protein (AccB), biotin carboxylase (AccC) and two subunits each of ACCase subunit alpha (AccA) and ACCase subunit beta (AccD). It depends on Zn(2+) as a cofactor.

The protein localises to the cytoplasm. It catalyses the reaction N(6)-carboxybiotinyl-L-lysyl-[protein] + acetyl-CoA = N(6)-biotinyl-L-lysyl-[protein] + malonyl-CoA. It functions in the pathway lipid metabolism; malonyl-CoA biosynthesis; malonyl-CoA from acetyl-CoA: step 1/1. Its function is as follows. Component of the acetyl coenzyme A carboxylase (ACC) complex. Biotin carboxylase (BC) catalyzes the carboxylation of biotin on its carrier protein (BCCP) and then the CO(2) group is transferred by the transcarboxylase to acetyl-CoA to form malonyl-CoA. This chain is Acetyl-coenzyme A carboxylase carboxyl transferase subunit beta, found in Exiguobacterium sibiricum (strain DSM 17290 / CCUG 55495 / CIP 109462 / JCM 13490 / 255-15).